Reading from the N-terminus, the 328-residue chain is GMP reductase (328 aa).

Residue C176 is the Thioimidate intermediate of the active site. An NADP(+)-binding site is contributed by 205 to 228 (IIADGGIRTHGDIAKSIRFGASMI).

Belongs to the IMPDH/GMPR family. GuaC type 2 subfamily.

The enzyme catalyses IMP + NH4(+) + NADP(+) = GMP + NADPH + 2 H(+). Catalyzes the irreversible NADPH-dependent deamination of GMP to IMP. It functions in the conversion of nucleobase, nucleoside and nucleotide derivatives of G to A nucleotides, and in maintaining the intracellular balance of A and G nucleotides. The protein is GMP reductase of Streptococcus pneumoniae (strain CGSP14).